We begin with the raw amino-acid sequence, 507 residues long: Myocyte-specific enhancer factor 2D (507 aa).

The MADS-box domain maps to 3-57 (RKKIQIQRITDERNRQVTFTKRKFGLMKKAYELSVLCDCEIALIIFNHSNKLFQY). Residues 58–86 (ASTDMDKVLLKYTEYNEPHESRTNADIIE) constitute a DNA-binding region (mef2-type). A phosphoserine mark is found at Ser98, Ser106, Ser110, Ser121, and Ser180. Positions 174-207 (TDPRLLSPQQPALQRNSVSPGLPQRPASAGAMLG) are disordered. The segment covering 180–192 (SPQQPALQRNSVS) has biased composition (polar residues). Ser190 is modified (phosphoserine; by PKA). Phosphoserine is present on Ser231. 3 disordered regions span residues 244–267 (NKVI…PSRK), 357–392 (WQQP…QQPH), and 423–507 (SIKS…WTLK). The residue at position 245 (Lys245) is an N6-acetyllysine. Residue Ser251 is modified to Phosphoserine. Pro residues predominate over residues 363-389 (PQQPQPPQPPQSQPQPPQPQPQQPPQQ). Position 425 is an N6-acetyllysine; alternate (Lys425). Lys425 participates in a covalent cross-link: Glycyl lysine isopeptide (Lys-Gly) (interchain with G-Cter in SUMO); alternate. Position 430 is a phosphoserine (Ser430).

In terms of assembly, forms a complex with class II HDACs in undifferentiating cells. On myogenic differentiation, HDACs are released into the cytoplasm allowing MEF2s to interact with other proteins for activation. Interacts with HDAC4 (in undifferentiating cells); the interaction translocates MEF2D to nuclear dots. Forms a heterodimer with MEF2A. Interacts with MAPK7; the interaction phosphorylates but does not activate MEF2D. Interacts with MYOG. Interacts with CCAR2 and HDAC3. Phosphorylated on Ser-430 by CDK5 is required for Lys-425 sumoylation and inhibits transcriptional activity. In neurons, enhanced CDK5 activity induced by neurotoxins promotes caspase 3-mediated cleavage leading to neuron apoptosis. Phosphorylation on Ser-180 can be enhanced by EGF. Phosphorylated and activated by CaMK4. Post-translationally, acetylated on Lys-425 by CREBBP. Acetylated by EP300. Deacetylated by SIRT1 and HDAC3. In terms of processing, sumoylated on Lys-425 with SUMO2 but not SUMO1; which inhibits transcriptional activity and myogenic activity. Desumoylated by SENP3.

It is found in the nucleus. Transcriptional activator which binds specifically to the MEF2 element, 5'-YTA[AT](4)TAR-3', found in numerous muscle-specific, growth factor- and stress-induced genes. Mediates cellular functions not only in skeletal and cardiac muscle development, but also in neuronal differentiation and survival. Plays diverse roles in the control of cell growth, survival and apoptosis via p38 MAPK signaling in muscle-specific and/or growth factor-related transcription. Plays a critical role in the regulation of neuronal apoptosis. The polypeptide is Myocyte-specific enhancer factor 2D (Mef2d) (Rattus norvegicus (Rat)).